Consider the following 156-residue polypeptide: Ribonuclease H (156 aa).

In terms of domain architecture, RNase H type-1 spans 1-142; sequence MGKQVEIFTD…CDELARAAAN (142 aa). The Mg(2+) site is built by Asp-10, Glu-48, Asp-70, and Asp-134.

The protein belongs to the RNase H family. As to quaternary structure, monomer. Mg(2+) is required as a cofactor.

It is found in the cytoplasm. It catalyses the reaction Endonucleolytic cleavage to 5'-phosphomonoester.. Endonuclease that specifically degrades the RNA of RNA-DNA hybrids. The polypeptide is Ribonuclease H (Photorhabdus laumondii subsp. laumondii (strain DSM 15139 / CIP 105565 / TT01) (Photorhabdus luminescens subsp. laumondii)).